Consider the following 657-residue polypeptide: Glycogen debranching enzyme (657 aa).

D336 serves as the catalytic Nucleophile. E371 (proton donor) is an active-site residue. The segment at 460–479 (ANGEENRDGTNNNYSNNHGK) is disordered.

This sequence belongs to the glycosyl hydrolase 13 family.

It carries out the reaction Hydrolysis of (1-&gt;6)-alpha-D-glucosidic linkages to branches with degrees of polymerization of three or four glucose residues in limit dextrin.. Its pathway is glycan degradation; glycogen degradation. Its function is as follows. Removes maltotriose and maltotetraose chains that are attached by 1,6-alpha-linkage to the limit dextrin main chain, generating a debranched limit dextrin. This chain is Glycogen debranching enzyme, found in Escherichia coli O127:H6 (strain E2348/69 / EPEC).